The chain runs to 1914 residues: Zinc finger protein Rlf (1914 aa).

Position 41 is a phosphoserine (Ser-41). Basic and acidic residues predominate over residues 521–540 (KQYRRRDLTDQHKEKRDKKP). The interval 521–541 (KQYRRRDLTDQHKEKRDKKPI) is disordered. The C2H2-type 1 zinc finger occupies 582–604 (YTCPVCIKKFKRKEMFVPHVMEH). Residue Lys-622 forms a Glycyl lysine isopeptide (Lys-Gly) (interchain with G-Cter in SUMO2) linkage. 2 positions are modified to phosphoserine: Ser-632 and Ser-634. C2H2-type zinc fingers lie at residues 671–696 (YPCP…KAEH), 714–736 (EKCT…EQVH), 742–766 (YMCV…KQKH), 771–795 (YKCE…EAQH), and 801–825 (YTCN…LSMH). Lys-839 is covalently cross-linked (Glycyl lysine isopeptide (Lys-Gly) (interchain with G-Cter in SUMO2)). The disordered stretch occupies residues 882–907 (TETAENLKENSDSNSSDQLSHSSSAS). The span at 893 to 907 (DSNSSDQLSHSSSAS) shows a compositional bias: low complexity. Residues 954–979 (FTCGFDGCGSTYKNARGMQKHLRKVH) form a C2H2-type 7 zinc finger. Residues 993–1028 (LFPSLGNEHNQTTEKLDAEPKPCSDTNSDSPDEGLD) form a disordered region. Positions 1003–1014 (QTTEKLDAEPKP) are enriched in basic and acidic residues. 2 consecutive C2H2-type zinc fingers follow at residues 1127 to 1152 (FFCE…LKKH) and 1172 to 1195 (FQCH…KNKH). A disordered region spans residues 1231 to 1290 (LGGDPSSNSEKPHCHPKKDECSSETDLESSCEETESKTSDISSPIGSHREEQEGREGRGS). A compositionally biased stretch (basic and acidic residues) spans 1240–1251 (EKPHCHPKKDEC). The segment covering 1252 to 1263 (SSETDLESSCEE) has biased composition (acidic residues). Residues 1277-1289 (SHREEQEGREGRG) are compositionally biased toward basic and acidic residues. 5 C2H2-type zinc fingers span residues 1310 to 1335 (FHCI…RTVH), 1362 to 1387 (FACK…SDSH), 1407 to 1432 (FSCN…MEQH), 1444 to 1469 (IHCD…YYRH), and 1549 to 1574 (YPCM…KRTH). Lys-1423 participates in a covalent cross-link: Glycyl lysine isopeptide (Lys-Gly) (interchain with G-Cter in SUMO2). Residues Lys-1599 and Lys-1611 each participate in a glycyl lysine isopeptide (Lys-Gly) (interchain with G-Cter in SUMO2) cross-link. Residues 1620 to 1654 (SERTEHSHSPGDSSAPIQNTDCCHSSERDGGQKGC) form a disordered region. Residues 1629-1642 (PGDSSAPIQNTDCC) are compositionally biased toward polar residues. Lys-1696 participates in a covalent cross-link: Glycyl lysine isopeptide (Lys-Gly) (interchain with G-Cter in SUMO2). The disordered stretch occupies residues 1725 to 1757 (ESETRQHSSGQENTVKNPTHVPKENFRKHSQPR). Polar residues predominate over residues 1731-1741 (HSSGQENTVKN). A Glycyl lysine isopeptide (Lys-Gly) (interchain with G-Cter in SUMO2) cross-link involves residue Lys-1762. The segment at 1783 to 1807 (KEDDFDDWEPSEHLTLSNSSQSSND) is disordered. Over residues 1796–1807 (LTLSNSSQSSND) the composition is skewed to polar residues.

It belongs to the krueppel C2H2-type zinc-finger protein family. As to quaternary structure, interacts with RIT1 and RIT2. As to expression, widely expressed in fetal and adult tissues.

It is found in the nucleus. May be involved in transcriptional regulation. This is Zinc finger protein Rlf (RLF) from Homo sapiens (Human).